A 356-amino-acid chain; its full sequence is S-adenosylmethionine:tRNA ribosyltransferase-isomerase (356 aa).

It belongs to the QueA family. In terms of assembly, monomer.

The protein resides in the cytoplasm. It catalyses the reaction 7-aminomethyl-7-carbaguanosine(34) in tRNA + S-adenosyl-L-methionine = epoxyqueuosine(34) in tRNA + adenine + L-methionine + 2 H(+). It functions in the pathway tRNA modification; tRNA-queuosine biosynthesis. In terms of biological role, transfers and isomerizes the ribose moiety from AdoMet to the 7-aminomethyl group of 7-deazaguanine (preQ1-tRNA) to give epoxyqueuosine (oQ-tRNA). In Citrobacter koseri (strain ATCC BAA-895 / CDC 4225-83 / SGSC4696), this protein is S-adenosylmethionine:tRNA ribosyltransferase-isomerase.